We begin with the raw amino-acid sequence, 206 residues long: SOSS complex subunit B2 (206 aa).

Residues 26–89 (IVLEIGRVTK…SMWKGCLTLY (64 aa)) constitute a DNA-binding region (OB). Disordered stretches follow at residues 114–146 (EPNPDYRGQQNKGAHNEQKNNSMNNSNNVGTGT) and 166–206 (SYAG…AFKR). Residues 181–196 (LPGTANNQTVMTTISN) show a composition bias toward polar residues.

The protein belongs to the SOSS-B family. SOSS-B2 subfamily. In terms of assembly, component of the SOSS complex, composed of SOSS-B (SOSS-B1/NABP2 or SOSS-B2/NABP1), SOSS-A/INTS3 and SOSS-C/INIP. SOSS complexes containing SOSS-B1/NABP2 are more abundant than complexes containing SOSS-B2/NABP1.

Its subcellular location is the nucleus. Component of the SOSS complex, a multiprotein complex that functions downstream of the MRN complex to promote DNA repair and G2/M checkpoint. In the SOSS complex, acts as a sensor of single-stranded DNA that binds to single-stranded DNA, in particular to polypyrimidines. The SOSS complex associates with DNA lesions and influences diverse endpoints in the cellular DNA damage response including cell-cycle checkpoint activation, recombinational repair and maintenance of genomic stability. Required for efficient homologous recombination-dependent repair of double-strand breaks (DSBs) and ATM-dependent signaling pathways. The protein is SOSS complex subunit B2 (NABP1) of Bos taurus (Bovine).